Reading from the N-terminus, the 404-residue chain is MSQSRYFFTSESVSEGHPDKVSDQISDAVLDEFIRQDPDSRVACETFVTTGQVIVGGEVTTKGVVDVQTIARKVITEIGYTKGEYMFDAHSCGVLSALHSQSPDINRGVDRKEEISDELDRVGAGDQGMMFGYACTETPELMPAALQFAQQLVKKLAEIRKEGKIMTYLRPDAKSQVTLEYVDEQVKRVDAVVVSTQHDPEPEGVSEAEWQAVIKKDIIENVINVVIPAALLDEKTKLHINPTGRFVIGGPHGDTGLTGRKIIVDTYGGAAPHGGGAFSGKDPSKVDRSAAYASRHVAKNIVAAGLADKCTVQVSYAIGVAQPVSIYINTHGTAKHGLTDAEIQEKAEVIFDLRPASIIKRFGLNKPEGWCYQETAAYGHFGRENFPWERTEKVEELKKALNVA.

The segment covering 1-13 has biased composition (polar residues); sequence MSQSRYFFTSESV. Residues 1–21 form a disordered region; that stretch reads MSQSRYFFTSESVSEGHPDKV. H17 contacts ATP. D19 is a binding site for Mg(2+). E45 is a K(+) binding site. Residues E58 and Q101 each contribute to the L-methionine site. Positions 101 to 111 are flexible loop; the sequence is QSPDINRGVDR. ATP contacts are provided by residues 172–174, 245–246, D254, 260–261, A277, and K281; these read DAK, RF, and RK. D254 contacts L-methionine. Residue K285 participates in L-methionine binding.

This sequence belongs to the AdoMet synthase family. As to quaternary structure, homotetramer; dimer of dimers. Mg(2+) serves as cofactor. Requires K(+) as cofactor.

Its subcellular location is the cytoplasm. It carries out the reaction L-methionine + ATP + H2O = S-adenosyl-L-methionine + phosphate + diphosphate. It functions in the pathway amino-acid biosynthesis; S-adenosyl-L-methionine biosynthesis; S-adenosyl-L-methionine from L-methionine: step 1/1. In terms of biological role, catalyzes the formation of S-adenosylmethionine (AdoMet) from methionine and ATP. The overall synthetic reaction is composed of two sequential steps, AdoMet formation and the subsequent tripolyphosphate hydrolysis which occurs prior to release of AdoMet from the enzyme. This is S-adenosylmethionine synthase from Chlorobium phaeobacteroides (strain DSM 266 / SMG 266 / 2430).